The sequence spans 132 residues: ATP synthase epsilon chain (132 aa).

The protein belongs to the ATPase epsilon chain family. As to quaternary structure, F-type ATPases have 2 components, CF(1) - the catalytic core - and CF(0) - the membrane proton channel. CF(1) has five subunits: alpha(3), beta(3), gamma(1), delta(1), epsilon(1). CF(0) has three main subunits: a, b and c.

It localises to the cell inner membrane. Produces ATP from ADP in the presence of a proton gradient across the membrane. This Anaeromyxobacter dehalogenans (strain 2CP-1 / ATCC BAA-258) protein is ATP synthase epsilon chain.